The primary structure comprises 58 residues: Cyclotide trypsin inhibitor TopI1 (58 aa).

A signal peptide spans 1–23 (MKFIIVLLLLTALTLTSIPVIEG). The segment at residues 24-55 (ILKRCKTYDDCKDVCKARKGKCEFGICKCMIK) is a cross-link (cyclopeptide (Ile-Lys)). Cystine bridges form between Cys28-Cys45, Cys34-Cys50, and Cys38-Cys52. The residue at position 56 (Ser56) is a Serine amide.

In terms of processing, this is a cyclic peptide. As to expression, expressed by the venom gland.

Its subcellular location is the secreted. Functionally, first cyclic scorpion trypsin inhibitor (Kd~0.5 nM). Does not inhibit chymotrypsin. This is Cyclotide trypsin inhibitor TopI1 from Tityus obscurus (Amazonian scorpion).